The sequence spans 500 residues: Cysteine--tRNA ligase (500 aa).

Cys29 serves as a coordination point for Zn(2+). Residues 31 to 41 (VTVYDLCHLGH) carry the 'HIGH' region motif. The Zn(2+) site is built by Cys213, His238, and Glu242. Residues 270-274 (KMSKS) carry the 'KMSKS' region motif. Lys273 is a binding site for ATP.

The protein belongs to the class-I aminoacyl-tRNA synthetase family. As to quaternary structure, monomer. Zn(2+) serves as cofactor.

The protein resides in the cytoplasm. It carries out the reaction tRNA(Cys) + L-cysteine + ATP = L-cysteinyl-tRNA(Cys) + AMP + diphosphate. This chain is Cysteine--tRNA ligase, found in Prochlorococcus marinus (strain NATL1A).